The primary structure comprises 785 residues: Cadherin-7 (785 aa).

Residues 1 to 27 (MKLGKVELCHFLQLIALFLCFSGMSQA) form the signal peptide. Residues 28-47 (ELPRSRSKPYFQSGRSRTKR) constitute a propeptide that is removed on maturation. Topologically, residues 28 to 607 (ELPRSRSKPY…AYVLPAGLST (580 aa)) are extracellular. 5 consecutive Cadherin domains span residues 49-153 (WVWN…EPKF), 154-262 (LDGP…PPRF), 263-377 (PRRS…PPVF), 378-482 (SSPL…APEF), and 482-599 (FAMD…AEAY). N-linked (GlcNAc...) asparagine glycosylation is found at N449 and N530. Residues 608 to 628 (GALIAILACVLTLLVLILLIV) form a helical membrane-spanning segment. The Cytoplasmic segment spans residues 629 to 785 (TMRRRKKEPL…YGNGQESLYS (157 aa)).

It localises to the cell membrane. Cadherins are calcium-dependent cell adhesion proteins. They preferentially interact with themselves in a homophilic manner in connecting cells; cadherins may thus contribute to the sorting of heterogeneous cell types. This is Cadherin-7 (Cdh7) from Mus musculus (Mouse).